Here is a 123-residue protein sequence, read N- to C-terminus: Basic phospholipase A2 Ph-TX1 (123 aa).

The Ca(2+) site is built by Y27, G29, and G31. Cystine bridges form between C28-C45, C44-C96, C50-C123, C51-C89, C59-C83, and C77-C87. The active site involves H48. D49 lines the Ca(2+) pocket. Residue D90 is part of the active site.

It belongs to the phospholipase A2 family. Group II subfamily. D49 sub-subfamily. In terms of assembly, monomer. It depends on Ca(2+) as a cofactor. Expressed by the venom gland.

Its subcellular location is the secreted. The catalysed reaction is a 1,2-diacyl-sn-glycero-3-phosphocholine + H2O = a 1-acyl-sn-glycero-3-phosphocholine + a fatty acid + H(+). Inhibited by divalent cations different from calcium ions (cadmium, magnesium, manganese, zinc), since they act as competitive antagonists of this cofactor. Functionally, snake venom phospholipase A2 (PLA2) that induces in vivo myotoxicity, moderates footpad edema, and causes in vitro neuromuscular blockade. PLA2 catalyzes the calcium-dependent hydrolysis of the 2-acyl groups in 3-sn-phosphoglycerides. The polypeptide is Basic phospholipase A2 Ph-TX1 (Bothrocophias hyoprora (Amazonian hognose viper)).